The primary structure comprises 419 residues: GTPase Obg (419 aa).

Residues 1-158 form the Obg domain; sequence MFVDQARIFV…KWIRLELKLL (158 aa). The region spanning 159-327 is the OBG-type G domain; it reads ADVGLVGFPN…LMGKTYALLQ (169 aa). Residues 165–172, 190–194, 212–215, 282–285, and 308–310 contribute to the GTP site; these read GFPNAGKS, FTTLV, DIPG, NKMD, and SAV. 2 residues coordinate Mg(2+): Ser-172 and Thr-192. Residues 342 to 419 form the OCT domain; the sequence is RRFEEELPFK…IKDFEFEFTE (78 aa).

Belongs to the TRAFAC class OBG-HflX-like GTPase superfamily. OBG GTPase family. As to quaternary structure, monomer. The cofactor is Mg(2+).

The protein localises to the cytoplasm. In terms of biological role, an essential GTPase which binds GTP, GDP and possibly (p)ppGpp with moderate affinity, with high nucleotide exchange rates and a fairly low GTP hydrolysis rate. Plays a role in control of the cell cycle, stress response, ribosome biogenesis and in those bacteria that undergo differentiation, in morphogenesis control. The polypeptide is GTPase Obg (Syntrophomonas wolfei subsp. wolfei (strain DSM 2245B / Goettingen)).